The sequence spans 238 residues: SPEG neighbor protein (238 aa).

An IQ domain is found at 29-55; the sequence is QSAAIRIQASYRGHRSRKELREKGPPR. Ig-like domains are found at residues 54–143 and 147–236; these read PRVL…ARIL and PTKI…ARVD.

The chain is SPEG neighbor protein from Homo sapiens (Human).